Here is a 341-residue protein sequence, read N- to C-terminus: HTH-type transcriptional repressor PurR (341 aa).

Positions 2-56 constitute an HTH lacI-type domain; sequence ATIKDVAKRAGVSTTTVSHVINKTRFVADETKAAVWEAIKELHYSPSAVARSLKV. Residues 4-23 constitute a DNA-binding region (H-T-H motif); the sequence is IKDVAKRAGVSTTTVSHVIN. Residues 48–56 mediate DNA binding; sequence SAVARSLKV. Hypoxanthine-binding residues include Tyr-73, Arg-190, Thr-192, Phe-221, and Asp-275.

Homodimer.

It functions in the pathway purine metabolism; purine nucleotide biosynthesis [regulation]. In terms of biological role, is the main repressor of the genes involved in the de novo synthesis of purine nucleotides, regulating purB, purC, purEK, purF, purHD, purL, purMN and guaBA expression. PurR is allosterically activated to bind its cognate DNA by binding the purine corepressors, hypoxanthine or guanine, thereby effecting transcription repression. The protein is HTH-type transcriptional repressor PurR of Edwardsiella ictaluri (strain 93-146).